A 333-amino-acid polypeptide reads, in one-letter code: Adenosine deaminase (333 aa).

His-12 and His-14 together coordinate Zn(2+). Substrate-binding residues include His-14, Asp-16, and Gly-170. Zn(2+) is bound at residue His-197. Glu-200 acts as the Proton donor in catalysis. Asp-278 contacts Zn(2+). Asp-279 provides a ligand contact to substrate.

Belongs to the metallo-dependent hydrolases superfamily. Adenosine and AMP deaminases family. Adenosine deaminase subfamily. The cofactor is Zn(2+).

The enzyme catalyses adenosine + H2O + H(+) = inosine + NH4(+). It catalyses the reaction 2'-deoxyadenosine + H2O + H(+) = 2'-deoxyinosine + NH4(+). Catalyzes the hydrolytic deamination of adenosine and 2-deoxyadenosine. The chain is Adenosine deaminase from Escherichia coli O157:H7.